The following is a 284-amino-acid chain: Protein SIC1 (284 aa).

Residues 1–89 (MTPSTPPRSR…SPFPKSSVKR (89 aa)) are disordered. Threonine 5 carries the post-translational modification Phosphothreonine; by PHO85. 2 stretches are compositionally biased toward polar residues: residues 18-52 (PSGNTSSSALMQGQKTPQKPSQNLVPVTPSTTKSF) and 61-79 (PNSNMGMTSPFNGLTSPQR). Threonine 33 carries the phosphothreonine modification. Serine 76 bears the Phosphoserine mark. Threonine 173 bears the Phosphothreonine mark. Phosphoserine is present on residues serine 198 and serine 201. Lysine derivative is present on residues lysine 268, lysine 272, and lysine 274.

In terms of assembly, interacts with HOG1. Post-translationally, phosphorylated by cyclin-dependent kinases CDC28 and PHO85 in association with G1-cyclins, promoting degradation of SIC1 and exit form G1. May contain a covalently attached chromophore. In terms of processing, the N-terminus is blocked.

The protein localises to the cytoplasm. It is found in the nucleus. Its function is as follows. Substrate and inhibitor of the cyclin-dependent protein kinase CDC28. Its activity could be important for faithful segregation of chromosomes to daughter cells. It acts in response to a signal from a post-start checkpoint. In Saccharomyces cerevisiae (strain ATCC 204508 / S288c) (Baker's yeast), this protein is Protein SIC1 (SIC1).